Consider the following 612-residue polypeptide: Peroxisomal carnitine O-octanoyltransferase (612 aa).

An N-acetylmethionine modification is found at methionine 1. N6-succinyllysine is present on residues lysine 40 and lysine 57. Histidine 327 (proton acceptor) is an active-site residue. CoA is bound by residues lysine 406 and lysine 410–aspartate 417. At lysine 406 the chain carries N6-acetyllysine; alternate. Lysine 406 is subject to N6-succinyllysine; alternate. Residues tyrosine 439, threonine 441, and threonine 452 each contribute to the (R)-carnitine site. Positions alanine 610 to leucine 612 match the Microbody targeting signal motif.

Belongs to the carnitine/choline acetyltransferase family. As to expression, liver.

The protein localises to the peroxisome. It catalyses the reaction octanoyl-CoA + (R)-carnitine = O-octanoyl-(R)-carnitine + CoA. The enzyme catalyses 4,8-dimethylnonanoyl-CoA + (R)-carnitine = O-4,8-dimethylnonanoyl-(R)-carnitine + CoA. It functions in the pathway lipid metabolism; fatty acid beta-oxidation. In terms of biological role, beta-oxidation of fatty acids. The highest activity concerns the C6 to C10 chain length substrate. The protein is Peroxisomal carnitine O-octanoyltransferase (Crot) of Rattus norvegicus (Rat).